The following is a 764-amino-acid chain: 5-methyltetrahydropteroyltriglutamate--homocysteine methyltransferase (764 aa).

5-methyltetrahydropteroyltri-L-glutamate contacts are provided by residues Arg19–Lys22 and Lys113. Residues Ile435–Ser437 and Glu488 contribute to the L-homocysteine site. Residues Ile435 to Ser437 and Glu488 contribute to the L-methionine site. 5-methyltetrahydropteroyltri-L-glutamate-binding positions include Arg519–Cys520 and Trp565. Asp603 is a binding site for L-homocysteine. Asp603 is a binding site for L-methionine. Residue Glu609 participates in 5-methyltetrahydropteroyltri-L-glutamate binding. The Zn(2+) site is built by His645, Cys647, and Glu669. The active-site Proton donor is His698. Cys730 contributes to the Zn(2+) binding site.

This sequence belongs to the vitamin-B12 independent methionine synthase family. Zn(2+) serves as cofactor.

The enzyme catalyses 5-methyltetrahydropteroyltri-L-glutamate + L-homocysteine = tetrahydropteroyltri-L-glutamate + L-methionine. It participates in amino-acid biosynthesis; L-methionine biosynthesis via de novo pathway; L-methionine from L-homocysteine (MetE route): step 1/1. Functionally, catalyzes the transfer of a methyl group from 5-methyltetrahydrofolate to homocysteine resulting in methionine formation. The protein is 5-methyltetrahydropteroyltriglutamate--homocysteine methyltransferase of Desulforamulus reducens (strain ATCC BAA-1160 / DSM 100696 / MI-1) (Desulfotomaculum reducens).